Here is a 397-residue protein sequence, read N- to C-terminus: Elongation factor Tu (397 aa).

Residues 10-207 (KPHVNIGTIG…ACDSYIEEPE (198 aa)) enclose the tr-type G domain. A G1 region spans residues 19–26 (GHIDHGKT). 19-26 (GHIDHGKT) contacts GTP. T26 contacts Mg(2+). A G2 region spans residues 60–64 (GITIA). The tract at residues 81 to 84 (DCPG) is G3. GTP is bound by residues 81–85 (DCPGH) and 136–139 (NKCD). The tract at residues 136–139 (NKCD) is G4. The interval 174–176 (SAL) is G5.

It belongs to the TRAFAC class translation factor GTPase superfamily. Classic translation factor GTPase family. EF-Tu/EF-1A subfamily. In terms of assembly, monomer.

The protein localises to the cytoplasm. It catalyses the reaction GTP + H2O = GDP + phosphate + H(+). In terms of biological role, GTP hydrolase that promotes the GTP-dependent binding of aminoacyl-tRNA to the A-site of ribosomes during protein biosynthesis. This is Elongation factor Tu from Maridesulfovibrio salexigens (strain ATCC 14822 / DSM 2638 / NCIMB 8403 / VKM B-1763) (Desulfovibrio salexigens).